The primary structure comprises 327 residues: UDP-glucose 4-epimerase (327 aa).

Thr119 provides a ligand contact to substrate. The Proton acceptor role is filled by Tyr143.

It belongs to the NAD(P)-dependent epimerase/dehydratase family. The cofactor is NAD(+).

The enzyme catalyses UDP-alpha-D-glucose = UDP-alpha-D-galactose. It participates in carbohydrate metabolism; galactose metabolism. Its pathway is glycan metabolism; exopolysaccharide biosynthesis. The protein is UDP-glucose 4-epimerase (exoB) of Rhizobium leguminosarum bv. trifolii.